A 440-amino-acid chain; its full sequence is Alpha-ionylideneethane synthase aba3 (440 aa).

The protein belongs to the alpha-ionylideneethane synthase family.

The protein operates within hormone biosynthesis. Alpha-ionylideneethane synthase; part of the gene cluster that mediates the biosynthesis of abscisic acid (ABA), a phytohormone that acts antagonistically toward salicylic acid (SA), jasmonic acid (JA) and ethylene (ETH) signaling, to impede plant defense responses. The first step of the pathway catalyzes the reaction from farnesyl diphosphate to alpha-ionylideneethane performed by the alpha-ionylideneethane synthase aba3 via a three-step reaction mechanism involving 2 neutral intermediates, beta-farnesene and allofarnesene. The cytochrome P450 monooxygenase aba1 might then be involved in the conversion of alpha-ionylideneethane to alpha-ionylideneacetic acid. Alpha-ionylideneacetic acid is further converted to abscisic acid in 2 steps involving the cytochrome P450 monooxygenase aba2 and the short-chain dehydrogenase/reductase aba4, via the intermediates 1'-deoxy-ABA or 1',4'-trans-diol-ABA, depending on the order of action of these 2 enzymes. Aba2 is responsible for the hydroxylation of carbon atom C-1' and aba4 might be involved in the oxidation of the C-4' carbon atom. This Botryotinia fuckeliana (strain B05.10) (Noble rot fungus) protein is Alpha-ionylideneethane synthase aba3.